The chain runs to 399 residues: Trimethyllysine dioxygenase (399 aa).

The Fe cation site is built by H214, D216, and H360.

This sequence belongs to the gamma-BBH/TMLD family. It depends on Fe(2+) as a cofactor. Requires L-ascorbate as cofactor.

The protein resides in the cytoplasm. The catalysed reaction is N(6),N(6),N(6)-trimethyl-L-lysine + 2-oxoglutarate + O2 = (3S)-3-hydroxy-N(6),N(6),N(6)-trimethyl-L-lysine + succinate + CO2. Its pathway is amine and polyamine biosynthesis; carnitine biosynthesis. Functionally, converts trimethyllysine (TML) into hydroxytrimethyllysine (HTML). This Meyerozyma guilliermondii (strain ATCC 6260 / CBS 566 / DSM 6381 / JCM 1539 / NBRC 10279 / NRRL Y-324) (Yeast) protein is Trimethyllysine dioxygenase.